The chain runs to 91 residues: Probable insulin-like peptide gamma-type 1 (91 aa).

Residues 1-26 (MSSYRQTLFILIILIVIILFVNEGQG) form the signal peptide. 3 disulfide bridges follow: Cys37/Cys66, Cys49/Cys79, and Cys65/Cys70.

This sequence belongs to the insulin family.

It is found in the secreted. The polypeptide is Probable insulin-like peptide gamma-type 1 (ins-11) (Caenorhabditis elegans).